The sequence spans 78 residues: Large ribosomal subunit protein bL28 (78 aa).

Residues 1–21 form a disordered region; it reads MSRVCQVTGKRPMSGNNRSHA.

This sequence belongs to the bacterial ribosomal protein bL28 family.

The protein is Large ribosomal subunit protein bL28 of Photorhabdus laumondii subsp. laumondii (strain DSM 15139 / CIP 105565 / TT01) (Photorhabdus luminescens subsp. laumondii).